A 685-amino-acid polypeptide reads, in one-letter code: Stromal interaction molecule 1 (685 aa).

An N-terminal signal peptide occupies residues 1–22; it reads MDVCARLALWLLWGLLLHQGQS. Residues 23 to 213 are Extracellular-facing; it reads LSHSHSEKNT…LLTRHNHLKD (191 aa). The segment at 24 to 43 is disordered; sequence SHSHSEKNTGASSGATSEES. The segment covering 32–41 has biased composition (low complexity); sequence TGASSGATSE. 2 consecutive EF-hand domains span residues 64–97 and 102–126; these read SFEAVRNIHKLMDDDANGDVDVEESDEFLREDLN and TVKHSTFHGEDKLISVEDLWKAWKS. Ca(2+)-binding residues include D76, D78, N80, D82, and E87. N-linked (GlcNAc...) asparagine glycans are attached at residues N131 and N171. One can recognise an SAM domain in the interval 132–200; sequence WTVDEVIQWL…QLKALDTVLF (69 aa). Residues 214–234 traverse the membrane as a helical segment; it reads FMLVVSIVIGVGGCWFAYIQN. Topologically, residues 235–685 are cytoplasmic; it reads RYSKEHMKKM…LKIFKKPLKK (451 aa). A coiled-coil region spans residues 248–442; the sequence is LEGLHRAEQS…IEILCGFQIV (195 aa). Residue S257 is modified to Phosphoserine. The tract at residues 344–442 is SOAR/CAD; that stretch reads PEALQKWLQL…IEILCGFQIV (99 aa). The tract at residues 475–483 is contributes to fast Ca(2+)-dependent inactivation of CRAC channels; the sequence is DDVDDMDEE. The span at 490 to 499 shows a compositional bias: low complexity; it reads MQSPSLQSSV. The segment at 490–541 is disordered; it reads MQSPSLQSSVRQRLTEPQLGLGSQRDLTHSDSESSLHMSDRQRVAPKPPQMG. T504 is subject to Phosphothreonine. At S512 the chain carries Phosphoserine. Residues 515-532 show a composition bias toward basic and acidic residues; the sequence is DLTHSDSESSLHMSDRQR. T517 carries the post-translational modification Phosphothreonine. Phosphoserine is present on residues S519, S521, S523, S524, S567, S575, S602, S608, S618, S621, and S628. Residues 596–685 form a disordered region; it reads LMELNPSVPP…LKIFKKPLKK (90 aa). Residues 608–620 are compositionally biased toward low complexity; that stretch reads SPLLDSSHSLSPS. Residues 642-645 carry the Microtubule tip localization signal motif; the sequence is TRIP. Residues 655-666 show a composition bias toward acidic residues; sequence EEDNGSIGEETD. S660 bears the Phosphoserine mark. T665 is modified (phosphothreonine). S668 carries the phosphoserine modification. The span at 670-685 shows a compositional bias: basic residues; it reads GRKKFPLKIFKKPLKK. The tract at residues 672–685 is required for generation of inwardly rectifying CRAC currents; that stretch reads KKFPLKIFKKPLKK.

Monomer in the presence of Ca(2+). It oligomerizes in absence of Ca(2+). Forms homooligomers and heterooligomers with STIM2. Interacts with pore-forming subunits of CRAC channels, ORAI1, ORAI2 and ORAI3; this interaction is potentiated upon Ca(2+) store depletion. Interacts (via the transmembrane region and the SOAR/CAD domain) with SPPL3; the interaction promotes the binding of STIM1 to ORAI1. Interacts with ORAI1. Interacts with MAPRE1; probably required for targeting to the growing microtubule plus ends. Interacts with CRACR2A/EFCAB4B; the interaction is direct and takes place in absence of Ca(2+). Forms a complex with CRACR2A/EFCAB4B and ORAI1 at low concentration of Ca(2+), the complex dissociates at elevated Ca(2+) concentrations. Interacts with SARAF, promoting a slow inactivation of STIM1-dependent SOCE activity, possibly by facilitating the deoligomerization of STIM1. Interacts with EFHB; the interaction takes place upon Ca(2+)-store depletion and inhibits the association with SARAF. Interacts with ASPH. Interacts with SLC35G1; intracellular Ca(2+)-dependent. May interact with ATP1A1, ATP2A2, ATP2B1, ATP2B4, KPNB1 and XPO1; through SLC35G1. Interacts with STIMATE, promoting STIM1 conformational switch. Interacts with TMEM178A. Interacts with CASQ1 (via C-terminal end and preferentially with the monomeric form); this interaction increases in response to a depletion of intracellular Ca(2+), decreases both STIM1 aggregation and clustering, interaction of STIM1 with ORAI1 and store-operated Ca(2+) entry (SOCE) activity. Interacts with ADCY8. Interacts with TMEM203. In terms of processing, glycosylation is required for cell surface expression. Post-translationally, phosphorylated predominantly on Ser residues. Expressed in maturation-stage ameloblasts (at protein level). Expressed in all tissues examined and in many cell types, including bone marrow stroma, fibroblast, B-cell precursors, lymphoma and erythroleukemia.

The protein localises to the cell membrane. The protein resides in the endoplasmic reticulum membrane. Its subcellular location is the sarcoplasmic reticulum. It is found in the cytoplasm. It localises to the cytoskeleton. Its function is as follows. Acts as a Ca(2+) sensor that gates two major inward rectifying Ca(2+) channels at the plasma membrane: Ca(2+) release-activated Ca(2+) (CRAC) channels and arachidonate-regulated Ca(2+)-selective (ARC) channels. Plays a role in mediating store-operated Ca(2+) entry (SOCE), a Ca(2+) influx following depletion of intracellular Ca(2+) stores. Upon Ca(2+) depletion, translocates from the endoplasmic reticulum to the plasma membrane where it activates CRAC channel pore-forming subunits ORA1, ORA2 and ORAI3 to generate sustained and oscillatory Ca(2+) entry. Involved in enamel formation. The protein is Stromal interaction molecule 1 (Stim1) of Mus musculus (Mouse).